The following is a 786-amino-acid chain: Endonuclease MutS2 (786 aa).

An ATP-binding site is contributed by 332–339; sequence GPNTGGKT. Positions 711 to 786 constitute a Smr domain; sequence IDLRGMDSME…GTGVTVVELK (76 aa).

This sequence belongs to the DNA mismatch repair MutS family. MutS2 subfamily. Homodimer. Binds to stalled ribosomes, contacting rRNA.

Functionally, endonuclease that is involved in the suppression of homologous recombination and thus may have a key role in the control of bacterial genetic diversity. Acts as a ribosome collision sensor, splitting the ribosome into its 2 subunits. Detects stalled/collided 70S ribosomes which it binds and splits by an ATP-hydrolysis driven conformational change. Acts upstream of the ribosome quality control system (RQC), a ribosome-associated complex that mediates the extraction of incompletely synthesized nascent chains from stalled ribosomes and their subsequent degradation. Probably generates substrates for RQC. The chain is Endonuclease MutS2 from Clostridium tetani (strain Massachusetts / E88).